The primary structure comprises 256 residues: Anamorsin homolog (256 aa).

The interval 1-136 (MNSLSLELNK…DTNESSTINI (136 aa)) is N-terminal SAM-like domain. The disordered stretch occupies residues 126-148 (WDTNESSTINIPSTSSNNPWASI). Low complexity predominate over residues 131 to 144 (SSTINIPSTSSNNP). The segment at 137–166 (PSTSSNNPWASIEGGDRINENDLVSENDKT) is linker. Positions 176, 185, 188, and 190 each coordinate [2Fe-2S] cluster. The tract at residues 176–190 (CEVGKTKKACKNCTC) is fe-S binding site A. Residues Cys-217, Cys-220, Cys-228, and Cys-231 each coordinate [4Fe-4S] cluster. 2 short sequence motifs (cx2C motif) span residues 217–220 (CGNC) and 228–231 (CGGC). The tract at residues 217–231 (CGNCSLGDAFRCGGC) is fe-S binding site B.

This sequence belongs to the anamorsin family. In terms of assembly, monomer. The cofactor is [2Fe-2S] cluster. It depends on [4Fe-4S] cluster as a cofactor.

The protein resides in the cytoplasm. It localises to the mitochondrion intermembrane space. Functionally, component of the cytosolic iron-sulfur (Fe-S) protein assembly (CIA) machinery. Required for the maturation of extramitochondrial Fe-S proteins. Part of an electron transfer chain functioning in an early step of cytosolic Fe-S biogenesis, facilitating the de novo assembly of a [4Fe-4S] cluster on the cytosolic Fe-S scaffold complex. Electrons are transferred from NADPH via a FAD- and FMN-containing diflavin oxidoreductase. Together with the diflavin oxidoreductase, also required for the assembly of the diferric tyrosyl radical cofactor of ribonucleotide reductase (RNR), probably by providing electrons for reduction during radical cofactor maturation in the catalytic small subunit. The sequence is that of Anamorsin homolog (rsc43) from Dictyostelium discoideum (Social amoeba).